The sequence spans 680 residues: DNA ligase (680 aa).

Residues Asp35 to Asp39, Ser86 to Leu87, and Glu111 each bind NAD(+). Residue Lys113 is the N6-AMP-lysine intermediate of the active site. The NAD(+) site is built by Arg134, Glu174, Lys290, and Lys314. 4 residues coordinate Zn(2+): Cys408, Cys411, Cys427, and Cys433. Residues Val597–Glu680 enclose the BRCT domain.

The protein belongs to the NAD-dependent DNA ligase family. LigA subfamily. The cofactor is Mg(2+). It depends on Mn(2+) as a cofactor.

The catalysed reaction is NAD(+) + (deoxyribonucleotide)n-3'-hydroxyl + 5'-phospho-(deoxyribonucleotide)m = (deoxyribonucleotide)n+m + AMP + beta-nicotinamide D-nucleotide.. DNA ligase that catalyzes the formation of phosphodiester linkages between 5'-phosphoryl and 3'-hydroxyl groups in double-stranded DNA using NAD as a coenzyme and as the energy source for the reaction. It is essential for DNA replication and repair of damaged DNA. This Corynebacterium glutamicum (strain ATCC 13032 / DSM 20300 / JCM 1318 / BCRC 11384 / CCUG 27702 / LMG 3730 / NBRC 12168 / NCIMB 10025 / NRRL B-2784 / 534) protein is DNA ligase.